A 310-amino-acid chain; its full sequence is Oxygen-dependent coproporphyrinogen-III oxidase (310 aa).

S93 provides a ligand contact to substrate. Positions 97 and 107 each coordinate a divalent metal cation. H107 serves as the catalytic Proton donor. Residue 109–111 (NVR) participates in substrate binding. Positions 146 and 176 each coordinate a divalent metal cation. The tract at residues 241 to 276 (YVEFNLVYDRGTLFGLQSGGRTESILMSLPPQVRWS) is important for dimerization. Residue 259–261 (GGR) participates in substrate binding.

This sequence belongs to the aerobic coproporphyrinogen-III oxidase family. Homodimer. Requires a divalent metal cation as cofactor.

The protein localises to the cytoplasm. It carries out the reaction coproporphyrinogen III + O2 + 2 H(+) = protoporphyrinogen IX + 2 CO2 + 2 H2O. It functions in the pathway porphyrin-containing compound metabolism; protoporphyrin-IX biosynthesis; protoporphyrinogen-IX from coproporphyrinogen-III (O2 route): step 1/1. In terms of biological role, involved in the heme biosynthesis. Catalyzes the aerobic oxidative decarboxylation of propionate groups of rings A and B of coproporphyrinogen-III to yield the vinyl groups in protoporphyrinogen-IX. The sequence is that of Oxygen-dependent coproporphyrinogen-III oxidase from Pseudomonas fluorescens (strain SBW25).